A 134-amino-acid polypeptide reads, in one-letter code: DNA-directed RNA polymerase subunit omega (134 aa).

The protein belongs to the RNA polymerase subunit omega family. In terms of assembly, the RNAP catalytic core consists of 2 alpha, 1 beta, 1 beta' and 1 omega subunit. When a sigma factor is associated with the core the holoenzyme is formed, which can initiate transcription.

The enzyme catalyses RNA(n) + a ribonucleoside 5'-triphosphate = RNA(n+1) + diphosphate. Functionally, promotes RNA polymerase assembly. Latches the N- and C-terminal regions of the beta' subunit thereby facilitating its interaction with the beta and alpha subunits. The polypeptide is DNA-directed RNA polymerase subunit omega (Brucella anthropi (strain ATCC 49188 / DSM 6882 / CCUG 24695 / JCM 21032 / LMG 3331 / NBRC 15819 / NCTC 12168 / Alc 37) (Ochrobactrum anthropi)).